Here is a 67-residue protein sequence, read N- to C-terminus: MAKVKMKTNRSAAKRFKVTAKGKIKRWKSGGAHYNTKKSSKRKRHLRKHTYVKDNMLKHVKALLKEF.

A disordered region spans residues 22-45; sequence GKIKRWKSGGAHYNTKKSSKRKRH. Over residues 35–45 the composition is skewed to basic residues; sequence NTKKSSKRKRH.

It belongs to the bacterial ribosomal protein bL35 family.

The sequence is that of Large ribosomal subunit protein bL35 from Aquifex aeolicus (strain VF5).